Reading from the N-terminus, the 73-residue chain is Excelsatoxin A (73 aa).

A signal peptide spans 1–20 (MRFALVAAITIALLVAGSVA). Positions 21–37 (DESSEDIDNIVIKTPLD) are excised as a propeptide. 3 disulfide bridges follow: cysteine 41–cysteine 58, cysteine 46–cysteine 60, and cysteine 54–cysteine 69.

The protein belongs to the gympietide family. As to expression, expressed in trichomes, that are stiff epidermal hairs located on the surface of petioles and leaves. Not expressed in other aerial parts.

It localises to the secreted. Its function is as follows. Neurotoxin certainly responsible for the defensive, persistent, and painful stings of the giant stinging tree. Inhibits inactivation of Nav1.7/SCN9A sodium channel in sensory neurons by directly interacting with TMEM233, a newly described Nav-interacting protein. Has virtually no effect on Nav1.7/SCN9A function in heterologous expression systems and in neurons that do not express TMEM233. Also weakly but significantly affects Nav1.8/SCN10A. Coexpression of TMEM233 with Nav also confers ExTxA sensitivity to Nav1.1-Nav1.6. On the Nav1.7/SCN9A channel, causes a significant hyperpolarizing shift in the voltage dependence of activation. Its effects on Nav currents are irreversible, with no apparent reduction in activity even after repeated wash steps over 30 minutes. Does not show activity on Nav1.9/SCN11A. Does not show insecticidal activities. In vivo, induces nocifensive behavior in mice (licking or biting and shaking or lifting of the affected paw) lasting for approximately 1 hour. The polypeptide is Excelsatoxin A (Dendrocnide excelsa (Giant stinging tree)).